The sequence spans 414 residues: 3-oxoacyl-[acyl-carrier-protein] synthase 2 (414 aa).

Residues 3-411 (KRRVVITGLG…GTNGTLVLSR (409 aa)) enclose the Ketosynthase family 3 (KS3) domain. Catalysis depends on for beta-ketoacyl synthase activity residues cysteine 164, histidine 304, and histidine 341.

This sequence belongs to the thiolase-like superfamily. Beta-ketoacyl-ACP synthases family. As to quaternary structure, homodimer.

It catalyses the reaction a fatty acyl-[ACP] + malonyl-[ACP] + H(+) = a 3-oxoacyl-[ACP] + holo-[ACP] + CO2. It carries out the reaction (9Z)-hexadecenoyl-[ACP] + malonyl-[ACP] + H(+) = 3-oxo-(11Z)-octadecenoyl-[ACP] + holo-[ACP] + CO2. The protein operates within lipid metabolism; fatty acid biosynthesis. Its function is as follows. Involved in the type II fatty acid elongation cycle. Catalyzes the elongation of a wide range of acyl-ACP by the addition of two carbons from malonyl-ACP to an acyl acceptor. Can efficiently catalyze the conversion of palmitoleoyl-ACP (cis-hexadec-9-enoyl-ACP) to cis-vaccenoyl-ACP (cis-octadec-11-enoyl-ACP), an essential step in the thermal regulation of fatty acid composition. The protein is 3-oxoacyl-[acyl-carrier-protein] synthase 2 (fabF) of Coxiella burnetii (strain RSA 493 / Nine Mile phase I).